Here is a 279-residue protein sequence, read N- to C-terminus: MMATDTSLTTSQTFAANRAVGEVAVEVRADGGVTRRGPVHEAGSLRVRFPSPEQQGLSAVLVNTAGGVAGGDRFSISLDVQAHARLTLTTAAAEKVYRTHGPAAQLDIKLKVASGGHLAWLPQETILFDQARAERRIDIELADDASLLLSEMVIFGRSAMGETMQHGRFVDRWRMRRGGKLVFAETVRLDGDIASLFGRPAVLNGGVAIGTALIVPGDAALVERLREAADTFGAEVGISAWNGFAMARFCAQNAARLRADMMTILGRAAGRALPRLWLS.

It belongs to the UreD family. As to quaternary structure, ureD, UreF and UreG form a complex that acts as a GTP-hydrolysis-dependent molecular chaperone, activating the urease apoprotein by helping to assemble the nickel containing metallocenter of UreC. The UreE protein probably delivers the nickel.

The protein localises to the cytoplasm. Its function is as follows. Required for maturation of urease via the functional incorporation of the urease nickel metallocenter. The polypeptide is Urease accessory protein UreD (Rhodopseudomonas palustris (strain ATCC BAA-98 / CGA009)).